Here is a 346-residue protein sequence, read N- to C-terminus: Galanin receptor type 1 (346 aa).

Over M1–F33 the chain is Extracellular. N-linked (GlcNAc...) asparagine glycans are attached at residues N7 and N12. Residues I34–I54 traverse the membrane as a helical segment. Residues T55–T69 are Cytoplasmic-facing. The chain crosses the membrane as a helical span at residues N70–F90. Topologically, residues Q91 to K108 are extracellular. An intrachain disulfide couples C107 to C185. Residues F109 to V130 traverse the membrane as a helical segment. Topologically, residues D131–N150 are cytoplasmic. Residues A151–Y171 traverse the membrane as a helical segment. The Extracellular portion of the chain corresponds to Y172 to K196. N181 carries N-linked (GlcNAc...) asparagine glycosylation. The helical transmembrane segment at A197–C217 threads the bilayer. Topologically, residues Y218–T246 are cytoplasmic. The helical transmembrane segment at V247 to W267 threads the bilayer. Residues A268–E269 lie on the Extracellular side of the membrane. The helical transmembrane segment at F270–A290 threads the bilayer. Residues Y291–V346 are Cytoplasmic-facing. Residue C318 is the site of S-palmitoyl cysteine attachment. A compositionally biased stretch (basic and acidic residues) spans H326 to I335. The tract at residues H326–V346 is disordered.

The protein belongs to the G-protein coupled receptor 1 family. Interacts with GRP39 AND HTR1A. Post-translationally, three cysteine residues are found in the C-terminus, at least one of which may be palmitoylated. Spinal cord, small intestine, Rin14B insulinoma cells and several brain regions, particularly ventral hippocampus, amygdala, supraoptic nucleus, hypothalamus, thalamus, lateral parabrachial nucleus and locus coeruleus.

The protein resides in the cell membrane. In terms of biological role, receptor for the hormone galanin. The activity of this receptor is mediated by G proteins that inhibit adenylate cyclase activity. This chain is Galanin receptor type 1 (Galr1), found in Rattus norvegicus (Rat).